Here is a 536-residue protein sequence, read N- to C-terminus: MRILNYTIINLVISKSLLLNMNGIKKGIIHIIGIGGIGMSAIAEILHNSNYKVQGSDAQSNNNVDRLQKLGIEIYIGHNANNIKQAQVVVYSSAIKSDNVELVAARNNNKTILHRSGILAEIMKDKYVIAVSGSSGKTTTTAMIASIFDHSNTDATVIVGGILNSYQNNSKLGKSDILLIEADESDETMLKIPANIAVITSINNDHIDHYGTFDNIKNAFSQFINSADFAILPDSVGINDSESVSIKFGFEGVYPFVIQSPFVVPVHDIGIKKKKSASCSIKASNVKANNIRQHNNSIEFDVLIDGCSIDRSHWIPASCTETTAVLPLSSTQITSLRSRIIKNVVLSNAIGMHKVSNALAAISVAIKLGINDVDIKKGLLEFKGVARRFSLVADIKDVKLIEDYAHHPSEIQATLTAARSITKGKIIGIIEPFRFARIRNFFDEFIRIFMMFDYVILVPVHPPEDKPILGCRIDDIQEALISNGFNNVKIMNDALLISNFISDSTNSGDIVLFIGAGINVARLARETVVFMSGVEI.

133–139 (GSSGKTT) serves as a coordination point for ATP.

The protein belongs to the MurCDEF family.

The protein localises to the cytoplasm. It catalyses the reaction UDP-N-acetyl-alpha-D-muramate + L-alanine + ATP = UDP-N-acetyl-alpha-D-muramoyl-L-alanine + ADP + phosphate + H(+). It functions in the pathway cell wall biogenesis; peptidoglycan biosynthesis. In terms of biological role, cell wall formation. This chain is UDP-N-acetylmuramate--L-alanine ligase, found in Wolbachia sp. subsp. Brugia malayi (strain TRS).